Here is a 339-residue protein sequence, read N- to C-terminus: Coproporphyrin III ferrochelatase (339 aa).

Ser52 and Tyr121 together coordinate Fe-coproporphyrin III. His181 and Glu264 together coordinate Fe(2+).

Belongs to the ferrochelatase family.

The protein localises to the cytoplasm. It catalyses the reaction Fe-coproporphyrin III + 2 H(+) = coproporphyrin III + Fe(2+). Its pathway is porphyrin-containing compound metabolism; protoheme biosynthesis. Its function is as follows. Involved in coproporphyrin-dependent heme b biosynthesis. Catalyzes the insertion of ferrous iron into coproporphyrin III to form Fe-coproporphyrin III. The chain is Coproporphyrin III ferrochelatase from Mycolicibacterium vanbaalenii (strain DSM 7251 / JCM 13017 / BCRC 16820 / KCTC 9966 / NRRL B-24157 / PYR-1) (Mycobacterium vanbaalenii).